A 394-amino-acid chain; its full sequence is Elongation factor Tu 2 (394 aa).

A tr-type G domain is found at 10 to 204 (KPHVNVGTIG…ALDTYIPEPE (195 aa)). A G1 region spans residues 19–26 (GHVDHGKT). 19-26 (GHVDHGKT) provides a ligand contact to GTP. Position 26 (threonine 26) interacts with Mg(2+). Residues 60–64 (GITIS) are G2. Positions 81 to 84 (DCPG) are G3. GTP-binding positions include 81–85 (DCPGH) and 136–139 (NKCD). Residues 136–139 (NKCD) are G4. The G5 stretch occupies residues 174 to 176 (SAL).

The protein belongs to the TRAFAC class translation factor GTPase superfamily. Classic translation factor GTPase family. EF-Tu/EF-1A subfamily. As to quaternary structure, monomer.

The protein resides in the cytoplasm. The catalysed reaction is GTP + H2O = GDP + phosphate + H(+). In terms of biological role, GTP hydrolase that promotes the GTP-dependent binding of aminoacyl-tRNA to the A-site of ribosomes during protein biosynthesis. The protein is Elongation factor Tu 2 of Vibrio vulnificus (strain CMCP6).